The sequence spans 451 residues: Glycylpeptide N-tetradecanoyltransferase (451 aa).

Tetradecanoyl-CoA-binding positions include 34-37 (YKFW), 167-169 (LCV), and 175-179 (SKRLT). Catalysis depends on leucine 451, which acts as the Proton acceptor; via carboxylate.

Belongs to the NMT family. In terms of assembly, monomer.

It is found in the cytoplasm. The enzyme catalyses N-terminal glycyl-[protein] + tetradecanoyl-CoA = N-tetradecanoylglycyl-[protein] + CoA + H(+). In terms of biological role, adds a myristoyl group to the N-terminal glycine residue of certain cellular proteins. This Candida glabrata (strain ATCC 2001 / BCRC 20586 / JCM 3761 / NBRC 0622 / NRRL Y-65 / CBS 138) (Yeast) protein is Glycylpeptide N-tetradecanoyltransferase (NMT1).